The following is a 644-amino-acid chain: 1-deoxy-D-xylulose-5-phosphate synthase (644 aa).

Thiamine diphosphate is bound by residues His-78 and 120–122 (GHA). A Mg(2+)-binding site is contributed by Asp-150. Thiamine diphosphate is bound by residues 151-152 (AA), Asn-179, and Glu-374. Asn-179 contributes to the Mg(2+) binding site.

Belongs to the transketolase family. DXPS subfamily. Homodimer. The cofactor is Mg(2+). Thiamine diphosphate serves as cofactor.

The enzyme catalyses D-glyceraldehyde 3-phosphate + pyruvate + H(+) = 1-deoxy-D-xylulose 5-phosphate + CO2. It participates in metabolic intermediate biosynthesis; 1-deoxy-D-xylulose 5-phosphate biosynthesis; 1-deoxy-D-xylulose 5-phosphate from D-glyceraldehyde 3-phosphate and pyruvate: step 1/1. In terms of biological role, catalyzes the acyloin condensation reaction between C atoms 2 and 3 of pyruvate and glyceraldehyde 3-phosphate to yield 1-deoxy-D-xylulose-5-phosphate (DXP). The protein is 1-deoxy-D-xylulose-5-phosphate synthase of Chlamydia pneumoniae (Chlamydophila pneumoniae).